A 337-amino-acid polypeptide reads, in one-letter code: Holliday junction branch migration complex subunit RuvB (337 aa).

The segment at 1–179 (MTHQVSVLHQ…FSFSGRVSYY (179 aa)) is large ATPase domain (RuvB-L). ATP-binding positions include Leu-18, Arg-19, Gly-60, Lys-63, Thr-64, Ser-65, 126 to 128 (EDY), Arg-169, Tyr-179, and Arg-216. Residue Thr-64 participates in Mg(2+) binding. The segment at 180-250 (SDEDLATILK…VAEKALSMLL (71 aa)) is small ATPAse domain (RuvB-S). The interval 253 to 337 (DWGLNEIDIK…DNLQILGEEK (85 aa)) is head domain (RuvB-H). Residues Lys-308 and Arg-313 each contribute to the DNA site.

This sequence belongs to the RuvB family. As to quaternary structure, homohexamer. Forms an RuvA(8)-RuvB(12)-Holliday junction (HJ) complex. HJ DNA is sandwiched between 2 RuvA tetramers; dsDNA enters through RuvA and exits via RuvB. An RuvB hexamer assembles on each DNA strand where it exits the tetramer. Each RuvB hexamer is contacted by two RuvA subunits (via domain III) on 2 adjacent RuvB subunits; this complex drives branch migration. In the full resolvosome a probable DNA-RuvA(4)-RuvB(12)-RuvC(2) complex forms which resolves the HJ.

The protein localises to the cytoplasm. The catalysed reaction is ATP + H2O = ADP + phosphate + H(+). Its function is as follows. The RuvA-RuvB-RuvC complex processes Holliday junction (HJ) DNA during genetic recombination and DNA repair, while the RuvA-RuvB complex plays an important role in the rescue of blocked DNA replication forks via replication fork reversal (RFR). RuvA specifically binds to HJ cruciform DNA, conferring on it an open structure. The RuvB hexamer acts as an ATP-dependent pump, pulling dsDNA into and through the RuvAB complex. RuvB forms 2 homohexamers on either side of HJ DNA bound by 1 or 2 RuvA tetramers; 4 subunits per hexamer contact DNA at a time. Coordinated motions by a converter formed by DNA-disengaged RuvB subunits stimulates ATP hydrolysis and nucleotide exchange. Immobilization of the converter enables RuvB to convert the ATP-contained energy into a lever motion, pulling 2 nucleotides of DNA out of the RuvA tetramer per ATP hydrolyzed, thus driving DNA branch migration. The RuvB motors rotate together with the DNA substrate, which together with the progressing nucleotide cycle form the mechanistic basis for DNA recombination by continuous HJ branch migration. Branch migration allows RuvC to scan DNA until it finds its consensus sequence, where it cleaves and resolves cruciform DNA. This chain is Holliday junction branch migration complex subunit RuvB, found in Chlamydia felis (strain Fe/C-56) (Chlamydophila felis).